The following is a 1066-amino-acid chain: Isoleucine--tRNA ligase (1066 aa).

The 'HIGH' region motif lies at 47–57 (PYTTGYIHLGT). Residues 594–598 (KMSKS) carry the 'KMSKS' region motif. Position 597 (Lys-597) interacts with ATP.

Belongs to the class-I aminoacyl-tRNA synthetase family. IleS type 2 subfamily. In terms of assembly, monomer. It depends on Zn(2+) as a cofactor.

The protein resides in the cytoplasm. The catalysed reaction is tRNA(Ile) + L-isoleucine + ATP = L-isoleucyl-tRNA(Ile) + AMP + diphosphate. In terms of biological role, catalyzes the attachment of isoleucine to tRNA(Ile). As IleRS can inadvertently accommodate and process structurally similar amino acids such as valine, to avoid such errors it has two additional distinct tRNA(Ile)-dependent editing activities. One activity is designated as 'pretransfer' editing and involves the hydrolysis of activated Val-AMP. The other activity is designated 'posttransfer' editing and involves deacylation of mischarged Val-tRNA(Ile). This Methanocorpusculum labreanum (strain ATCC 43576 / DSM 4855 / Z) protein is Isoleucine--tRNA ligase.